Here is a 141-residue protein sequence, read N- to C-terminus: Alpha-lactalbumin (141 aa).

An N-terminal signal peptide occupies residues 1–19 (MMPLVPLLLVSIVFPGIQA). The 122-residue stretch at 20-141 (TQLTRCELTE…ENLEQWVCKK (122 aa)) folds into the C-type lysozyme domain. Intrachain disulfides connect C25/C139, C47/C130, C80/C96, and C92/C110. Residue N64 is glycosylated (N-linked (GlcNAc...) asparagine). Residues D101, D106, and D107 each contribute to the Ca(2+) site.

The protein belongs to the glycosyl hydrolase 22 family. As to quaternary structure, lactose synthase (LS) is a heterodimer of a catalytic component, beta1,4-galactosyltransferase (beta4Gal-T1) and a regulatory component, alpha-lactalbumin (LA). Mammary gland specific. Secreted in milk.

It is found in the secreted. Its function is as follows. Regulatory subunit of lactose synthase, changes the substrate specificity of galactosyltransferase in the mammary gland making glucose a good acceptor substrate for this enzyme. This enables LS to synthesize lactose, the major carbohydrate component of milk. In other tissues, galactosyltransferase transfers galactose onto the N-acetylglucosamine of the oligosaccharide chains in glycoproteins. The chain is Alpha-lactalbumin (LALBA) from Oryctolagus cuniculus (Rabbit).